Consider the following 852-residue polypeptide: RNA-binding protein 10 (852 aa).

Composition is skewed to basic and acidic residues over residues 1-14 (MEYE…DRTG) and 21-45 (RSQD…RSYP). The disordered stretch occupies residues 1-78 (MEYERRGGRG…RGQLQSHGVQ (78 aa)). In terms of domain architecture, RRM 1 spans 37–132 (RDMDYRSYPR…QKVSMHYSDP (96 aa)). Serine 61 carries the phosphoserine modification. The RanBP2-type zinc finger occupies 135 to 165 (KINEDWLCNKCGVQNFKRREKCFKCGVPKSE). An RRM 2 domain is found at 223–307 (DTIILRNLNP…KTINVEFAKG (85 aa)). An N6-acetyllysine modification is found at lysine 306. 6 disordered regions span residues 343-365 (GGES…QQDE), 386-410 (KGPG…EGGT), 426-446 (APGL…ATNS), 459-489 (SELQ…YPVP), 542-568 (EQSA…HKTK), and 634-675 (DLPK…EEKL). A compositionally biased stretch (polar residues) spans 430–446 (YQQSAEGSSGQGTATNS). Positions 463 to 484 (SPTHPSSALPPATSPTAPESYS) are enriched in low complexity. Basic and acidic residues predominate over residues 545–561 (ADGHKDTGASSKEGKEK). A phosphoserine mark is found at serine 640, serine 645, serine 655, serine 658, and serine 660. The span at 665 to 675 (ERGGPEREEKL) shows a compositional bias: basic and acidic residues. The C2H2-type; atypical zinc-finger motif lies at 681–706 (LACLLCRRQFPSKEALIRHQQLSGLH). Phosphoserine is present on residues serine 703, serine 719, and serine 767. The segment at 740–783 (AAERREKYGIPEPPEPKRRKYGGISTASVDFEQPTRDGLGSDNI) is disordered. The G-patch domain occupies 780-826 (SDNIGSRMLQAMGWKEGSGLGRKKQGIVTPIEAQTRVRGSGLGARGS). Arginine 824 is modified (omega-N-methylarginine).

As to quaternary structure, associates with the spliceosome. Component of a large chromatin remodeling complex, at least composed of MYSM1, PCAF, RBM10 and KIF11/TRIP5.

Its subcellular location is the nucleus. Binds to ssRNA containing the consensus sequence 5'-AGGUAA-3'. May be involved in post-transcriptional processing, most probably in mRNA splicing. Binds to RNA homopolymers, with a preference for poly(G) and poly(U) and little for poly(A). May bind to specific miRNA hairpins. The sequence is that of RNA-binding protein 10 from Rattus norvegicus (Rat).